Consider the following 54-residue polypeptide: UPF0391 membrane protein Pfl01_0044 (54 aa).

The next 2 membrane-spanning stretches (helical) occupy residues 4-24 and 29-49; these read WAIT…GGIA and GIAK…FFFG.

The protein belongs to the UPF0391 family.

The protein resides in the cell membrane. The sequence is that of UPF0391 membrane protein Pfl01_0044 from Pseudomonas fluorescens (strain Pf0-1).